A 204-amino-acid chain; its full sequence is tRNA (pseudouridine(54)-N(1))-methyltransferase (204 aa).

S-adenosyl-L-methionine-binding positions include Leu130, Gly157, 180 to 185 (LSPLEL), and Cys190.

It belongs to the methyltransferase superfamily. TrmY family. Homodimer.

The protein localises to the cytoplasm. The catalysed reaction is pseudouridine(54) in tRNA + S-adenosyl-L-methionine = N(1)-methylpseudouridine(54) in tRNA + S-adenosyl-L-homocysteine + H(+). Its function is as follows. Specifically catalyzes the N1-methylation of pseudouridine at position 54 (Psi54) in tRNAs. This is tRNA (pseudouridine(54)-N(1))-methyltransferase from Methanococcus aeolicus (strain ATCC BAA-1280 / DSM 17508 / OCM 812 / Nankai-3).